The sequence spans 220 residues: Ribonuclease HII (220 aa).

Residues 1 to 219 enclose the RNase H type-2 domain; that stretch reads MMIAGIDEAG…VENIREELKK (219 aa). A divalent metal cation is bound by residues Asp-7, Glu-8, and Asp-105.

This sequence belongs to the RNase HII family. The cofactor is Mn(2+). Mg(2+) is required as a cofactor.

The protein resides in the cytoplasm. The catalysed reaction is Endonucleolytic cleavage to 5'-phosphomonoester.. In terms of biological role, endonuclease that specifically degrades the RNA of RNA-DNA hybrids. The chain is Ribonuclease HII from Methanosarcina mazei (strain ATCC BAA-159 / DSM 3647 / Goe1 / Go1 / JCM 11833 / OCM 88) (Methanosarcina frisia).